The primary structure comprises 306 residues: Pantothenate kinase (306 aa).

ATP is bound at residue 91–98 (GSVAVGKS).

Belongs to the prokaryotic pantothenate kinase family.

It is found in the cytoplasm. It catalyses the reaction (R)-pantothenate + ATP = (R)-4'-phosphopantothenate + ADP + H(+). The protein operates within cofactor biosynthesis; coenzyme A biosynthesis; CoA from (R)-pantothenate: step 1/5. The polypeptide is Pantothenate kinase (Streptococcus thermophilus (strain CNRZ 1066)).